We begin with the raw amino-acid sequence, 417 residues long: Gamma-glutamyl phosphate reductase (417 aa).

Belongs to the gamma-glutamyl phosphate reductase family.

The protein localises to the cytoplasm. The enzyme catalyses L-glutamate 5-semialdehyde + phosphate + NADP(+) = L-glutamyl 5-phosphate + NADPH + H(+). It functions in the pathway amino-acid biosynthesis; L-proline biosynthesis; L-glutamate 5-semialdehyde from L-glutamate: step 2/2. Functionally, catalyzes the NADPH-dependent reduction of L-glutamate 5-phosphate into L-glutamate 5-semialdehyde and phosphate. The product spontaneously undergoes cyclization to form 1-pyrroline-5-carboxylate. This Haemophilus influenzae (strain PittEE) protein is Gamma-glutamyl phosphate reductase.